The primary structure comprises 30 residues: GVAFDDGSYTGIREINFEYNRETAIGGXQV.

Residues Gly1–Val30 enclose the Jacalin-type lectin domain.

The protein belongs to the jacalin lectin family. As to quaternary structure, tetramer of four alpha chains associated with two or four beta chains.

In terms of biological role, N-acetyl-galactosamine and D-galactose specific lectin. Binds the Tn-antigen structure GalNAc-alpha-1-O-Ser, the T-antigen structure Gal-beta1-3-GalNAc and IgA. The chain is Agglutinin alpha-1 chain from Morus nigra (Black mulberry).